The sequence spans 507 residues: MKELQGYLEIYRSRQQDFLYPLLFQEYIYVLAHDHGLNRLILYESMENLGYDNKSSSLVVKRLIARMYQQNHLIISANNSNQNKFVGHNKDFYSQMILEGFAVIVEIPFSLRFVSSLEGKEILESHNLRSIHSIFPFLEDTLSHLNYVSDILIPHPIHLEILVQSLRCWVQDAPSLHLLRFFLHEYHNWNNFISPKKSIFIFSKKNKRFFLFLYNSYVYECESIFVFLCKQSSHLRSTSSGALLERTHFYVKIEDLVIVFRNDFQTILWLFKDPLMHYVRYQGKSILASKGTPLLMNKWKYYLVNFWQCNFYLWSQSGRIHIKQLSNHSLDFLGYLSSVRLNPSVVKSQMLENSFIIDSAINKFDTIVPIISLIGSLAKAKFCNVSGHPISKPVRADSSDSDIIDRFGQICRNLSHYHSGSSKKTSLYRIKYILRLSCARTLARKHKSTVRAFLKRLGLELLEEFLTEEEHVLSLIFPRASFILRRLYRGRIWYLDIIRINDLANHQ.

It belongs to the intron maturase 2 family. MatK subfamily.

It localises to the plastid. Its subcellular location is the chloroplast. Functionally, usually encoded in the trnK tRNA gene intron. Probably assists in splicing its own and other chloroplast group II introns. This is Maturase K from Buxus microphylla (Littleleaf boxwood).